The primary structure comprises 1010 residues: Trifunctional purine biosynthetic protein adenosine-3 (1010 aa).

Ala2 bears the N-acetylalanine mark. The ATP-grasp domain maps to 111-318 (KEFMDRHGIS…LYEVIQSILD (208 aa)). Residues 190 to 193 (EELL), Glu197, Arg220, and Asn229 contribute to the ATP site. Positions 288 and 290 each coordinate Mg(2+). Lys350 is modified (N6-acetyllysine). Positions 434 to 809 (GLTYKESGVD…HFSVQPKKAR (376 aa)) are AIRS domain. Ser440 bears the Phosphoserine mark. At Thr682 the chain carries Phosphothreonine. At Ser802 the chain carries Phosphoserine. The GART domain stretch occupies residues 810 to 1010 (VAVLISGTGS…NGRICWVTED (201 aa)). Residue 818–820 (GSN) coordinates N(1)-(5-phospho-beta-D-ribosyl)glycinamide. (6R)-10-formyltetrahydrofolate contacts are provided by residues Arg871, 896–899 (MRIL), and Asn913. The active-site Proton donor is the His915. Position 947 to 951 (947 to 951 (AEDVD)) interacts with (6R)-10-formyltetrahydrofolate. Residue 977–980 (KLAE) coordinates N(1)-(5-phospho-beta-D-ribosyl)glycinamide.

This sequence in the N-terminal section; belongs to the GARS family. The protein in the central section; belongs to the AIR synthase family. It in the C-terminal section; belongs to the GART family. Homodimer. The cofactor is Mg(2+). Requires Mn(2+) as cofactor.

It carries out the reaction 5-phospho-beta-D-ribosylamine + glycine + ATP = N(1)-(5-phospho-beta-D-ribosyl)glycinamide + ADP + phosphate + H(+). The enzyme catalyses 2-formamido-N(1)-(5-O-phospho-beta-D-ribosyl)acetamidine + ATP = 5-amino-1-(5-phospho-beta-D-ribosyl)imidazole + ADP + phosphate + H(+). The catalysed reaction is N(1)-(5-phospho-beta-D-ribosyl)glycinamide + (6R)-10-formyltetrahydrofolate = N(2)-formyl-N(1)-(5-phospho-beta-D-ribosyl)glycinamide + (6S)-5,6,7,8-tetrahydrofolate + H(+). It participates in purine metabolism; IMP biosynthesis via de novo pathway; 5-amino-1-(5-phospho-D-ribosyl)imidazole from N(2)-formyl-N(1)-(5-phospho-D-ribosyl)glycinamide: step 2/2. It functions in the pathway purine metabolism; IMP biosynthesis via de novo pathway; N(1)-(5-phospho-D-ribosyl)glycinamide from 5-phospho-alpha-D-ribose 1-diphosphate: step 2/2. Its pathway is purine metabolism; IMP biosynthesis via de novo pathway; N(2)-formyl-N(1)-(5-phospho-D-ribosyl)glycinamide from N(1)-(5-phospho-D-ribosyl)glycinamide (10-formyl THF route): step 1/1. Functionally, trifunctional enzyme that catalyzes three distinct reactions as part of the 'de novo' inosine monophosphate biosynthetic pathway. The sequence is that of Trifunctional purine biosynthetic protein adenosine-3 (GART) from Bos taurus (Bovine).